The primary structure comprises 104 residues: Large ribosomal subunit protein uL24 (104 aa).

The protein belongs to the universal ribosomal protein uL24 family. In terms of assembly, part of the 50S ribosomal subunit.

Its function is as follows. One of two assembly initiator proteins, it binds directly to the 5'-end of the 23S rRNA, where it nucleates assembly of the 50S subunit. One of the proteins that surrounds the polypeptide exit tunnel on the outside of the subunit. The chain is Large ribosomal subunit protein uL24 from Shewanella pealeana (strain ATCC 700345 / ANG-SQ1).